The sequence spans 678 residues: SPS-sensor component PTR3 (678 aa).

Disordered regions lie at residues 111-158 and 179-211; these read TGQG…SDPT and ANTEVGSDHPLTTGTTRDQEEHTTKENYSSSLL. The segment covering 127-144 has biased composition (low complexity); that stretch reads TSPSSSSLSLTPSRSSST. Residues 149-158 are compositionally biased toward basic and acidic residues; that stretch reads ADNKTLSDPT. Residues 179 to 194 show a composition bias toward polar residues; it reads ANTEVGSDHPLTTGTT.

As to quaternary structure, homodimer. Component of the plasma membrane SPS (SSY1-PTR3-SSY5) amino acid sensor complex. Interacts directly with SSY1 and SSY5. Post-translationally, hyperphosphorylated in response to extracellular amino acids and dependent on the amino acid sensor component SSY1. Phosphorylation is positively regulated by casein kinases YCK1 and YCK2, and negatively regulated by phosphatase PP2A regulatory subunit RTS1.

The protein localises to the cell membrane. In terms of biological role, component of the SPS-sensor system, which regulates the expression of several amino acid-metabolizing enzymes and amino acid- and peptide-permeases in response to extracellular amino acid levels by controlling the activity of two transcription factors, STP1 and STP2. This chain is SPS-sensor component PTR3 (PTR3), found in Saccharomyces cerevisiae (strain ATCC 204508 / S288c) (Baker's yeast).